Consider the following 339-residue polypeptide: Malate dehydrogenase 3, cytoplasmic (339 aa).

NAD(+)-binding positions include 22–23, Asp-49, and Gly-96; that span reads NI. Position 105 (Arg-105) interacts with oxaloacetate. Residues Gln-119 and Asn-138 each contribute to the NAD(+) site. Residues Asn-138, Arg-169, His-194, and Ser-249 each contribute to the oxaloacetate site. His-194 (proton acceptor) is an active-site residue.

The protein belongs to the LDH/MDH superfamily. MDH type 2 family. As to expression, expressed in rosette leaves at low levels.

The protein localises to the cytoplasm. It carries out the reaction (S)-malate + NAD(+) = oxaloacetate + NADH + H(+). In terms of biological role, catalyzes a reversible NAD-dependent dehydrogenase reaction involved in central metabolism and redox homeostasis between organelle compartments. This Arabidopsis thaliana (Mouse-ear cress) protein is Malate dehydrogenase 3, cytoplasmic.